Here is a 179-residue protein sequence, read N- to C-terminus: MNETLKEELLQSIREVKDYPKKGILFKDITTLLNYPKLFNKLIDALKKRYLALNIDFIVGIEARGFILGSALAYALGVGFVPVRKKGKLPAHTLSQSYSLEYGSDSIEIHSDAFRGIKGVRVVLIDDLLATGGTALASLELIKALQAECIEACFLMGLKELPGIQLLEERVKTFCLLEC.

Belongs to the purine/pyrimidine phosphoribosyltransferase family. Homodimer.

Its subcellular location is the cytoplasm. The catalysed reaction is AMP + diphosphate = 5-phospho-alpha-D-ribose 1-diphosphate + adenine. It participates in purine metabolism; AMP biosynthesis via salvage pathway; AMP from adenine: step 1/1. Functionally, catalyzes a salvage reaction resulting in the formation of AMP, that is energically less costly than de novo synthesis. The polypeptide is Adenine phosphoribosyltransferase (Helicobacter pylori (strain G27)).